Reading from the N-terminus, the 88-residue chain is Sec-independent protein translocase protein TatA (88 aa).

The chain crosses the membrane as a helical span at residues 1–21 (MNLGPTEILLILVIVVLLFGA). The span at 46 to 56 (SNDDQRYEEQQ) shows a compositional bias: basic and acidic residues. Positions 46–88 (SNDDQRYEEQQQQRQIAAQAQQQVVNPVEIPQPQPTDIQRPQQ) are disordered. The segment covering 57–68 (QQRQIAAQAQQQ) has biased composition (low complexity).

This sequence belongs to the TatA/E family. As to quaternary structure, the Tat system comprises two distinct complexes: a TatABC complex, containing multiple copies of TatA, TatB and TatC subunits, and a separate TatA complex, containing only TatA subunits. Substrates initially bind to the TatABC complex, which probably triggers association of the separate TatA complex to form the active translocon.

The protein localises to the cell membrane. Functionally, part of the twin-arginine translocation (Tat) system that transports large folded proteins containing a characteristic twin-arginine motif in their signal peptide across membranes. TatA could form the protein-conducting channel of the Tat system. This chain is Sec-independent protein translocase protein TatA, found in Corynebacterium diphtheriae (strain ATCC 700971 / NCTC 13129 / Biotype gravis).